Consider the following 500-residue polypeptide: Cytochrome P450 11B1, mitochondrial (500 aa).

Residues 1–24 constitute a mitochondrion transit peptide; the sequence is MAFRLKSDVRLAGSWLCLRGARAL. C447 provides a ligand contact to heme.

It belongs to the cytochrome P450 family. The cofactor is heme.

It localises to the mitochondrion inner membrane. It catalyses the reaction a steroid + 2 reduced [adrenodoxin] + O2 + 2 H(+) = an 11beta-hydroxysteroid + 2 oxidized [adrenodoxin] + H2O. It carries out the reaction 11-deoxycortisol + 2 reduced [adrenodoxin] + O2 + 2 H(+) = cortisol + 2 oxidized [adrenodoxin] + H2O. The enzyme catalyses 21-hydroxyprogesterone + 2 reduced [adrenodoxin] + O2 + 2 H(+) = corticosterone + 2 oxidized [adrenodoxin] + H2O. The catalysed reaction is 21-hydroxyprogesterone + 2 reduced [adrenodoxin] + O2 + 2 H(+) = 18-hydroxy-11-deoxycorticosterone + 2 oxidized [adrenodoxin] + H2O. It catalyses the reaction 21-hydroxyprogesterone + 2 reduced [adrenodoxin] + O2 + 2 H(+) = 19-hydroxy-11-deoxycorticosterone + 2 oxidized [adrenodoxin] + H2O. It carries out the reaction cortisol + 2 reduced [adrenodoxin] + O2 + 2 H(+) = 18-hydroxycortisol + 2 oxidized [adrenodoxin] + H2O. The enzyme catalyses 11-deoxycortisol + 2 reduced [adrenodoxin] + O2 + 2 H(+) = 18-hydroxy-11-deoxycortisol + 2 oxidized [adrenodoxin] + H2O. It participates in steroid biosynthesis; glucocorticoid biosynthesis. It functions in the pathway steroid hormone biosynthesis. In terms of biological role, a cytochrome P450 monooxygenase involved in the biosynthesis of adrenal corticoids. Catalyzes a variety of reactions that are essential for many species, including detoxification, defense, and the formation of endogenous chemicals like steroid hormones. Steroid 11beta, 18- and 19-hydroxylase with preferred regioselectivity at 11beta, then 18, and lastly 19. Catalyzes the hydroxylation of 11-deoxycortisol and 11-deoxycorticosterone (21-hydroxyprogesterone) at 11beta position, yielding cortisol or corticosterone, respectively, but cannot produce aldosterone. Mechanistically, uses molecular oxygen inserting one oxygen atom into a substrate for hydroxylation and reducing the second into a water molecule. Two electrons are provided by NADPH via a two-protein mitochondrial transfer system comprising flavoprotein FDXR (adrenodoxin/ferredoxin reductase) and nonheme iron-sulfur protein FDX1 or FDX2 (adrenodoxin/ferredoxin). Due to its lack of 18-oxidation activity, it is incapable of generating aldosterone. Could also be involved in the androgen metabolic pathway. This is Cytochrome P450 11B1, mitochondrial (CYP11B1) from Cavia porcellus (Guinea pig).